We begin with the raw amino-acid sequence, 646 residues long: EF-hand calcium-binding domain-containing protein 6 (646 aa).

6 consecutive EF-hand domains span residues 1 to 27 (FLET…FDIP), 28 to 63 (LTPR…NYSP), 109 to 144 (DCYQ…CGCS), 214 to 249 (SSQL…FCHK), 321 to 356 (SHYH…NVQI), and 357 to 392 (LTDE…ERAA). The residue at position 29 (Thr-29) is a Phosphothreonine. The interval 390-452 (RAATPTATGD…TTAIPGTPPL (63 aa)) is disordered. Over residues 432–446 (KPQSHPCTAASTTAI) the composition is skewed to polar residues. Ser-435 bears the Phosphoserine mark. Thr-439 and Thr-449 each carry phosphothreonine. Positions 448 to 646 (GTPPLQNCDP…YNDFLRAFLQ (199 aa)) are interaction with PARK7. 4 consecutive EF-hand domains span residues 468–503 (GCWR…FNLD), 504–539 (ISKE…LLKA), 579–614 (HCWR…YSIN), and 615–646 (LSEE…AFLQ). The interaction with AR stretch occupies residues 552–646 (NAHKMKDSGA…YNDFLRAFLQ (95 aa)).

In terms of assembly, microtubule inner protein component of sperm flagellar doublet microtubules. Binds PARK7. Part of a ternary complex containing PARK7, EFCAB6/DJBP and AR.

Its subcellular location is the nucleus. It localises to the cytoplasm. It is found in the cytoskeleton. The protein localises to the flagellum axoneme. Its function is as follows. Negatively regulates the androgen receptor by recruiting histone deacetylase complex, and protein DJ-1 antagonizes this inhibition by abrogation of this complex. Microtubule inner protein (MIP) part of the dynein-decorated doublet microtubules (DMTs) in cilia axoneme, which is required for motile cilia beating. This is EF-hand calcium-binding domain-containing protein 6 (EFCAB6) from Macaca fascicularis (Crab-eating macaque).